The chain runs to 230 residues: MTTAARPTFEPARGGRGKGESDLSQLSKQYSSRDLPSHTKIKYRQTTQDAPEEVRSRDFRRELEERERVAVRDKNRDRPTREHTSSVSKKPRLDQIPAANLDADDPLTDEDADEDSDEDSDDDTAALLAELEKIKKERAEEQVRKELEQKAEEERIRMENILSGNPLLNLTGPAAQSQASFKVKRRWDDDVVFKNCAKGVDEMKKRQDKRFVNDTLRSEFHKKFMEKYVK.

The segment at 1–126 (MTTAARPTFE…DEDSDDDTAA (126 aa)) is disordered. The segment covering 22-34 (DLSQLSKQYSSRD) has biased composition (polar residues). The span at 52–84 (EEVRSRDFRRELEERERVAVRDKNRDRPTREHT) shows a compositional bias: basic and acidic residues. Residues 102 to 124 (DADDPLTDEDADEDSDEDSDDDT) are compositionally biased toward acidic residues. Residues 121–165 (DDDTAALLAELEKIKKERAEEQVRKELEQKAEEERIRMENILSGN) adopt a coiled-coil conformation.

This sequence belongs to the CWC15 family. In terms of assembly, identified in the spliceosome C complex. Component of the minor spliceosome, which splices U12-type introns.

Its subcellular location is the nucleus. Functionally, involved in pre-mRNA splicing as component of the spliceosome. The protein is Protein CWC15 homolog B (cwc15-b) of Xenopus laevis (African clawed frog).